Reading from the N-terminus, the 299-residue chain is Protein LacX, plasmid (299 aa).

This Lactococcus lactis subsp. lactis (Streptococcus lactis) protein is Protein LacX, plasmid (lacX).